Reading from the N-terminus, the 260-residue chain is Metallo-beta-lactamase domain-containing protein 1 (260 aa).

Residues histidine 118, histidine 120, aspartate 122, histidine 123, histidine 173, aspartate 196, and histidine 235 each contribute to the Zn(2+) site.

It belongs to the metallo-beta-lactamase superfamily. Glyoxalase II family. As to quaternary structure, homodimer. It depends on Zn(2+) as a cofactor.

It is found in the cytoplasm. The protein resides in the cytosol. It localises to the nucleus. The catalysed reaction is a ribonucleotidyl-ribonucleotide-RNA + H2O = a 3'-end ribonucleotide-RNA + a 5'-end 5'-phospho-ribonucleoside-RNA + H(+). Functionally, endoribonuclease that catalyzes the hydrolysis of histone-coding pre-mRNA 3'-end. Involved in histone pre-mRNA processing during the S-phase of the cell cycle, which is required for entering/progressing through S-phase. Cleaves histone pre-mRNA at a major and a minor cleavage site after the 5'-ACCCA-3' and the 5'-ACCCACA-3' sequence, respectively, and located downstream of the stem-loop. May require the presence of the HDE element located at the histone pre-RNA 3'-end to avoid non-specific cleavage. In Mus musculus (Mouse), this protein is Metallo-beta-lactamase domain-containing protein 1.